The sequence spans 604 residues: UvrABC system protein C (604 aa).

The region spanning 17-95 is the GIY-YIG domain; that stretch reads SQPGVYRMLN…IKSLAPRYNI (79 aa). The UVR domain maps to 204-239; sequence DEVLKTIEQKMFEASDRQAYEQAVLFRDQMQALRMI.

It belongs to the UvrC family. Interacts with UvrB in an incision complex.

Its subcellular location is the cytoplasm. Functionally, the UvrABC repair system catalyzes the recognition and processing of DNA lesions. UvrC both incises the 5' and 3' sides of the lesion. The N-terminal half is responsible for the 3' incision and the C-terminal half is responsible for the 5' incision. This is UvrABC system protein C from Nitrosomonas eutropha (strain DSM 101675 / C91 / Nm57).